The following is a 303-amino-acid chain: Recombination-associated protein RdgC (303 aa).

The protein belongs to the RdgC family.

It localises to the cytoplasm. The protein localises to the nucleoid. In terms of biological role, may be involved in recombination. In Edwardsiella ictaluri (strain 93-146), this protein is Recombination-associated protein RdgC.